The following is a 446-amino-acid chain: Sulfoquinovose isomerase (446 aa).

This sequence belongs to the SqvD family.

The enzyme catalyses 6-sulfo-beta-D-quinovose = 6-deoxy-6-sulfo-D-fructose. In terms of biological role, part of the sulfo-TAL (or sulfo-SFT) pathway, a D-sulfoquinovose degradation pathway that produces sulfolactate (SL). Catalyzes the isomerization of sulfoquinovose (SQ) to 6-deoxy-6-sulfo-D-fructose (SF). This chain is Sulfoquinovose isomerase, found in Priestia aryabhattai (Bacillus aryabhattai).